The primary structure comprises 509 residues: Coiled-coil domain-containing protein 181 (509 aa).

The segment covering 46–82 (ENINQDLKENETVMEHTKRHSDPDKSLQDEVSPRRND) has biased composition (basic and acidic residues). Disordered regions lie at residues 46-120 (ENIN…EEED) and 241-367 (PINN…EEKE). 2 stretches are compositionally biased toward polar residues: residues 243 to 266 (NNANSTENDPQQLLPRSSNSSVSG) and 300 to 334 (TCPSSAVNSDRSKGNGKSNHRTQSAHISPVTSTYC). The stretch at 335–375 (LSPRQKELQKQLEEKREKLKREEERRKIEEEKEKKRENDIV) forms a coiled coil. The span at 338–367 (RQKELQKQLEEKREKLKREEERRKIEEEKE) shows a compositional bias: basic and acidic residues.

This sequence belongs to the CCDC181 family. Homodimer. Interacts with HOOK1. Interacts with HOOK2. Interacts with HOOK3.

Its subcellular location is the cytoplasm. It is found in the cytoskeleton. The protein localises to the cell projection. The protein resides in the cilium. It localises to the flagellum. In terms of biological role, microtubule-binding protein that localizes to the microtubular manchette of elongating spermatids. The polypeptide is Coiled-coil domain-containing protein 181 (Homo sapiens (Human)).